Here is a 506-residue protein sequence, read N- to C-terminus: Tabersonine 16-hydroxylase 1 (506 aa).

The helical transmembrane segment at 1–21 (MEFYYFLYLAFLLFCFILSKT) threads the bilayer. Position 447 (C447) interacts with heme.

It belongs to the cytochrome P450 family. Requires heme as cofactor. As to expression, predominantly expressed in young leaves of mature plants. Low expression in roots and flowers, but not detected in stems and old leaves. Found predominantly in leaf epidermis. Barely detected in roots, internodes, young and mature leaves, and flower buds, but relatively abundant in fully developed flowers. Not detected in leaf epidermal cells.

The protein resides in the endoplasmic reticulum membrane. It carries out the reaction (-)-tabersonine + reduced [NADPH--hemoprotein reductase] + O2 = 16-hydroxytabersonine + oxidized [NADPH--hemoprotein reductase] + H2O + H(+). Its pathway is alkaloid biosynthesis; vindoline biosynthesis. Its function is as follows. Involved in the flower biosynthesis of vindoline, a precursor of vinblastine and vincristine. Hydroxylates specifically tabersonine, 2,3-dihydrotabersonine and 2,3-dihydro-3-hydroxytabersonine, but has no activity with naringenin, tryptamine, secologanin, strictosidine, ajmalicine, vindoline and catharanthine. The chain is Tabersonine 16-hydroxylase 1 from Catharanthus roseus (Madagascar periwinkle).